We begin with the raw amino-acid sequence, 115 residues long: Large ribosomal subunit protein bL20c (115 aa).

Belongs to the bacterial ribosomal protein bL20 family.

It localises to the plastid. Its subcellular location is the chloroplast. Functionally, binds directly to 23S ribosomal RNA and is necessary for the in vitro assembly process of the 50S ribosomal subunit. It is not involved in the protein synthesizing functions of that subunit. This is Large ribosomal subunit protein bL20c from Pyropia yezoensis (Susabi-nori).